Consider the following 198-residue polypeptide: Dual specificity protein phosphatase 14 (198 aa).

Residues 26–167 enclose the Tyrosine-protein phosphatase domain; the sequence is GIAQITSSLF…LIDYERQLFG (142 aa). Residue Cys-111 is the Phosphocysteine intermediate of the active site.

Belongs to the protein-tyrosine phosphatase family. Non-receptor class dual specificity subfamily. As to quaternary structure, interacts with CD28.

The catalysed reaction is O-phospho-L-tyrosyl-[protein] + H2O = L-tyrosyl-[protein] + phosphate. It catalyses the reaction O-phospho-L-seryl-[protein] + H2O = L-seryl-[protein] + phosphate. It carries out the reaction O-phospho-L-threonyl-[protein] + H2O = L-threonyl-[protein] + phosphate. Functionally, involved in the inactivation of MAP kinases. Dephosphorylates ERK, JNK and p38 MAP-kinases. Plays a negative role in TCR signaling by dephosphorylating MAP3K7 adapter TAB1 leading to its inactivation. In Homo sapiens (Human), this protein is Dual specificity protein phosphatase 14 (DUSP14).